The following is a 251-amino-acid chain: MDERHEAAGETSEKPKVLFLLNSYYGPFYDDGDNTGVNVVDLYEAFKVFEENGFDIVIASDTGDYGFDDKSFRDPAIVDETQSIFSNPDCSLMKKLKNIARLDRLNPSDYVIVYIPGGYGCSFDFPHAKVVQDFLYRFYETKGIICAVAQANIALAYTTNSDGQALCTNRRVTGCTWKDEVQNGVLNVMNRLNFYSFGHIAENIGAIFESPPVYVEDPFIVEDGQLFTGSNTNSAKGVAMEAVRAVLNYDG.

The protein belongs to the peptidase C56 family. HSP31-like subfamily.

It localises to the cytoplasm. The protein localises to the nucleus. The enzyme catalyses methylglyoxal + H2O = (R)-lactate + H(+). May catalyze the conversion of methylglyoxal (MG) to D-lactate in a single glutathione (GSH)-independent step. May play a role in detoxifying endogenously produced glyoxals. Involved in protection against reactive oxygen species (ROS). The protein is Putative glutathione-independent glyoxalase hsp3105 of Schizosaccharomyces pombe (strain 972 / ATCC 24843) (Fission yeast).